The sequence spans 204 residues: FMN-dependent NADH:quinone oxidoreductase (204 aa).

FMN-binding positions include Ser10, 15 to 17, and 139 to 142; these read SLS and TSGG.

Belongs to the azoreductase type 1 family. As to quaternary structure, homodimer. Requires FMN as cofactor.

It carries out the reaction 2 a quinone + NADH + H(+) = 2 a 1,4-benzosemiquinone + NAD(+). It catalyses the reaction N,N-dimethyl-1,4-phenylenediamine + anthranilate + 2 NAD(+) = 2-(4-dimethylaminophenyl)diazenylbenzoate + 2 NADH + 2 H(+). In terms of biological role, quinone reductase that provides resistance to thiol-specific stress caused by electrophilic quinones. Its function is as follows. Also exhibits azoreductase activity. Catalyzes the reductive cleavage of the azo bond in aromatic azo compounds to the corresponding amines. The protein is FMN-dependent NADH:quinone oxidoreductase of Rhizobium leguminosarum bv. trifolii (strain WSM2304).